The primary structure comprises 165 residues: Pyruvoyl-dependent arginine decarboxylase (165 aa).

The residue at position 53 (Ser-53) is a Pyruvic acid (Ser).

Belongs to the PdaD family. As to quaternary structure, trimer of an alpha-beta dimer. Requires pyruvate as cofactor.

The enzyme catalyses L-arginine + H(+) = agmatine + CO2. The sequence is that of Pyruvoyl-dependent arginine decarboxylase (pdaD) from Methanocaldococcus jannaschii (strain ATCC 43067 / DSM 2661 / JAL-1 / JCM 10045 / NBRC 100440) (Methanococcus jannaschii).